A 766-amino-acid polypeptide reads, in one-letter code: Phosphoribosylformylglycinamidine synthase subunit PurL (766 aa).

Residue H66 is part of the active site. Positions 69 and 113 each coordinate ATP. E115 provides a ligand contact to Mg(2+). Substrate-binding positions include 116–119 and R138; that span reads SHNH. H117 serves as the catalytic Proton acceptor. D139 is a Mg(2+) binding site. Q264 is a substrate binding site. D292 is a Mg(2+) binding site. 336–338 lines the substrate pocket; the sequence is ESQ. ATP is bound by residues N524 and G561. N562 is a Mg(2+) binding site. S564 contributes to the substrate binding site.

The protein belongs to the FGAMS family. As to quaternary structure, monomer. Part of the FGAM synthase complex composed of 1 PurL, 1 PurQ and 2 PurS subunits.

It localises to the cytoplasm. The catalysed reaction is N(2)-formyl-N(1)-(5-phospho-beta-D-ribosyl)glycinamide + L-glutamine + ATP + H2O = 2-formamido-N(1)-(5-O-phospho-beta-D-ribosyl)acetamidine + L-glutamate + ADP + phosphate + H(+). It functions in the pathway purine metabolism; IMP biosynthesis via de novo pathway; 5-amino-1-(5-phospho-D-ribosyl)imidazole from N(2)-formyl-N(1)-(5-phospho-D-ribosyl)glycinamide: step 1/2. Its function is as follows. Part of the phosphoribosylformylglycinamidine synthase complex involved in the purines biosynthetic pathway. Catalyzes the ATP-dependent conversion of formylglycinamide ribonucleotide (FGAR) and glutamine to yield formylglycinamidine ribonucleotide (FGAM) and glutamate. The FGAM synthase complex is composed of three subunits. PurQ produces an ammonia molecule by converting glutamine to glutamate. PurL transfers the ammonia molecule to FGAR to form FGAM in an ATP-dependent manner. PurS interacts with PurQ and PurL and is thought to assist in the transfer of the ammonia molecule from PurQ to PurL. This is Phosphoribosylformylglycinamidine synthase subunit PurL from Mycobacterium bovis (strain BCG / Pasteur 1173P2).